The chain runs to 307 residues: Tyrosine recombinase XerC (307 aa).

Positions 6–89 (HNTLQTVNTF…TLRTFFRYLM (84 aa)) constitute a Core-binding (CB) domain. A Tyr recombinase domain is found at 110–293 (RLPKALDVDQ…DFQHLAQVYD (184 aa)). Active-site residues include R151, K175, H245, R248, and H271. Residue Y280 is the O-(3'-phospho-DNA)-tyrosine intermediate of the active site.

This sequence belongs to the 'phage' integrase family. XerC subfamily. As to quaternary structure, forms a cyclic heterotetrameric complex composed of two molecules of XerC and two molecules of XerD.

The protein resides in the cytoplasm. Its function is as follows. Site-specific tyrosine recombinase, which acts by catalyzing the cutting and rejoining of the recombining DNA molecules. The XerC-XerD complex is essential to convert dimers of the bacterial chromosome into monomers to permit their segregation at cell division. It also contributes to the segregational stability of plasmids. The polypeptide is Tyrosine recombinase XerC (Alcanivorax borkumensis (strain ATCC 700651 / DSM 11573 / NCIMB 13689 / SK2)).